Reading from the N-terminus, the 342-residue chain is Replication factor C subunit 4 (342 aa).

Residues Val24, Val36, 61–68 (GMPGIGKT), Asn157, and Arg215 each bind ATP.

The protein belongs to the activator 1 small subunits family. Heteropentamer of subunits rfc1, rfc2, rfc3, rfc4 and rfc5 that forms a complex (RFC) with PCNA in the presence of ATP. Two other complexes exist where rfc1 can be replaced by either ctf18 or elg1 to form the ctf18-RFC or the elg1-RFC complexes respectively.

The protein resides in the nucleus. The elongation of primed DNA templates by DNA polymerase delta and epsilon requires the action of the accessory proteins PCNA and activator 1. This is Replication factor C subunit 4 (rfc4) from Schizosaccharomyces pombe (strain 972 / ATCC 24843) (Fission yeast).